We begin with the raw amino-acid sequence, 310 residues long: MDITETDLDALKCRSSATKSGYIHDPFIKFFSPSRNSHKPPIINRGTYVRTWSIDHILQKFIESFDGKKQIISLGAGTDTRVFRYISEYGPENLKFIEFDFYPNCIRKIRTIEKHEALKQNIGDYVVDISGGSLVSGSLDIYSYDIREIVHKGFPGFVDFSLPTIVLSECCLCYLEPEEASSLCRWFQNMFATSGIVVYEPIQGMDNFGKMMKANLSARGVILKTLDCYETTEQQRMRFLDYGYSEVIAEDFLTIEETWIPIEEKKRTMSIEMLDELEEWQLLAKHYCLTFAATENLWNQIILQLPHLKT.

S-adenosyl-L-methionine is bound by residues Arg-50, Gly-75, Asp-100, 145 to 146 (DI), and Glu-169.

Belongs to the methyltransferase superfamily. LCMT family.

It carries out the reaction [phosphatase 2A protein]-C-terminal L-leucine + S-adenosyl-L-methionine = [phosphatase 2A protein]-C-terminal L-leucine methyl ester + S-adenosyl-L-homocysteine. Its function is as follows. Methylates the carboxyl group of the C-terminal leucine residue of protein phosphatase 2A catalytic subunits to form alpha-leucine ester residues. This chain is Leucine carboxyl methyltransferase 1 (ppm1), found in Schizosaccharomyces pombe (strain 972 / ATCC 24843) (Fission yeast).